The sequence spans 64 residues: Large ribosomal subunit protein uL30 (64 aa).

As to quaternary structure, part of the 50S ribosomal subunit. Post-translationally, the protein is methylated on either Ala-2 or Lys-3.

The chain is Large ribosomal subunit protein uL30 from Rhodopseudomonas palustris (strain ATCC BAA-98 / CGA009).